Consider the following 498-residue polypeptide: Guanosine-5'-triphosphate,3'-diphosphate pyrophosphatase (498 aa).

The protein belongs to the GppA/Ppx family. GppA subfamily.

The enzyme catalyses guanosine 3'-diphosphate 5'-triphosphate + H2O = guanosine 3',5'-bis(diphosphate) + phosphate + H(+). It functions in the pathway purine metabolism; ppGpp biosynthesis; ppGpp from GTP: step 2/2. Catalyzes the conversion of pppGpp to ppGpp. Guanosine pentaphosphate (pppGpp) is a cytoplasmic signaling molecule which together with ppGpp controls the 'stringent response', an adaptive process that allows bacteria to respond to amino acid starvation, resulting in the coordinated regulation of numerous cellular activities. The polypeptide is Guanosine-5'-triphosphate,3'-diphosphate pyrophosphatase (Pectobacterium carotovorum subsp. carotovorum (strain PC1)).